The sequence spans 150 residues: Large ribosomal subunit protein bL9 (150 aa).

This sequence belongs to the bacterial ribosomal protein bL9 family.

Binds to the 23S rRNA. The sequence is that of Large ribosomal subunit protein bL9 from Shewanella woodyi (strain ATCC 51908 / MS32).